The chain runs to 122 residues: HLLQFRKMIKKMTGKEPIVSYAFYGCYCGKGGRGKPKDATDRCCFVHDCCYEKVTGCDPKWSYYTYSLENGDIVCEGDPYCTKVKCECDKKAAICFRDNLKTYKNRYMTFPDIFCTDPTEGC.

7 cysteine pairs are disulfide-bonded: C26–C115, C28–C44, C43–C95, C49–C122, C50–C88, C57–C81, and C75–C86. Ca(2+) is bound by residues Y27, G29, and G31. H47 is an active-site residue. A Ca(2+)-binding site is contributed by D48. D89 is a catalytic residue.

This sequence belongs to the phospholipase A2 family. Group II subfamily. D49 sub-subfamily. Ca(2+) serves as cofactor. As to expression, expressed by the venom gland.

Its subcellular location is the secreted. The catalysed reaction is a 1,2-diacyl-sn-glycero-3-phosphocholine + H2O = a 1-acyl-sn-glycero-3-phosphocholine + a fatty acid + H(+). Functionally, snake venom phospholipase A2 (PLA2) that displays edema-inducing activities. PLA-B is three times more active than PLA-A in edema-inducing activities. PLA2 catalyzes the calcium-dependent hydrolysis of the 2-acyl groups in 3-sn-phosphoglycerides. This chain is Basic phospholipase A2 PLA-B, found in Protobothrops flavoviridis (Habu).